The following is a 122-amino-acid chain: MSKLSRKQQTQKRHKRLRRNLSGTESRPRLAVFRSNNHIYAQIIDDDAQNTICAASTLDKDLKASLKVNAGSCDASTAVGELVAKKALSKGIKQVIFDRGGNIYHGRVKALAEAARVAGLNF.

The segment covering methionine 1 to arginine 19 has biased composition (basic residues). The disordered stretch occupies residues methionine 1–arginine 27.

Belongs to the universal ribosomal protein uL18 family. Part of the 50S ribosomal subunit; part of the 5S rRNA/L5/L18/L25 subcomplex. Contacts the 5S and 23S rRNAs.

In terms of biological role, this is one of the proteins that bind and probably mediate the attachment of the 5S RNA into the large ribosomal subunit, where it forms part of the central protuberance. This is Large ribosomal subunit protein uL18 from Prochlorococcus marinus (strain NATL1A).